We begin with the raw amino-acid sequence, 433 residues long: 23S rRNA (uracil(1939)-C(5))-methyltransferase RlmD (433 aa).

The TRAM domain occupies 10 to 68 (RTTTRQIITVSVNDLDSFGQGVARHNGKTLFIPGLLPQENAEVTVTEDKKQYARAKVVR). The [4Fe-4S] cluster site is built by Cys81, Cys87, Cys90, and Cys162. Residues Gln265, Phe294, Asn299, Glu315, Asn342, and Asp363 each contribute to the S-adenosyl-L-methionine site. Cys389 acts as the Nucleophile in catalysis.

This sequence belongs to the class I-like SAM-binding methyltransferase superfamily. RNA M5U methyltransferase family. RlmD subfamily.

The enzyme catalyses uridine(1939) in 23S rRNA + S-adenosyl-L-methionine = 5-methyluridine(1939) in 23S rRNA + S-adenosyl-L-homocysteine + H(+). Functionally, catalyzes the formation of 5-methyl-uridine at position 1939 (m5U1939) in 23S rRNA. This Escherichia coli (strain UTI89 / UPEC) protein is 23S rRNA (uracil(1939)-C(5))-methyltransferase RlmD.